The following is a 959-amino-acid chain: MGFLVMIREVSMAKAIRVVLLCVSVLWVVPKECACRSNFSRNSSSSSSSSLRPLRQRPSSVNVGALFTYDSFIGRAAKPAVKAAMDDVNADQSVLKGIKLNIIFQDSNCSGFIGTMGALQLMENKVVAAIGPQSSGIAHMISYVANELHVPLLSFGATDPTLSSLQFPYFLRTTQNDYFQMHAIADFLSYSGWRQVIAIFVDDECGRNGISVLGDVLAKKRSRISYKAAITPGADSSSIRDLLVSVNLMESRVFVVHVNPDSGLNVFSVAKSLGMMASGYVWIATDWLPTAMDSMEHVDSDTMDLLQGVVAFRHYTIESSVKRQFMARWKNLRPNDGFNSYAMYAYDSVWLVARALDVFFRENNNITFSNDPNLHKTNGSTIQLSALSVFNEGEKFMKIILGMNHTGVTGPIQFDSDRNRVNPAYEVLNLEGTAPRTVGYWSNHSGLSVVHPETLYSRPPNTSTANQRLKGIIYPGEVTKPPRGWVFPNNGKPLRIGVPNRVSYTDYVSKDKNPPGVRGYCIDVFEAAIELLPYPVPRTYILYGDGKRNPSYDNLVNEVVADNFDVAVGDITIVTNRTRYVDFTQPFIESGLVVVAPVKEAKSSPWSFLKPFTIEMWAVTGGFFLFVGAMVWILEHRFNQEFRGPPRRQLITIFWFSFSTMFFSHRENTVSSLGRFVLIIWLFVVLIINSSYTASLTSILTIRQLTSRIEGIDSLVTSNEPIGVQDGTFARNYLINELNILPSRIVPLKDEEQYLSALQRGPNAGGVAAIVDELPYIEVLLTNSNCKFRTVGQEFTRTGWGFAFQRDSPLAVDMSTAILQLSEEGELEKIHRKWLNYKHECSMQISNSEDSQLSLKSFWGLFLICGITCFMALTVFFWRVFWQYQRLLPESADEERAGEVSEPSRSGRGSRAPSFKELIKVVDKREAEIKEILKQKSSKKLKSTQSAAGTSQSQHGEIT.

The first 35 residues, 1 to 35, serve as a signal peptide directing secretion; sequence MGFLVMIREVSMAKAIRVVLLCVSVLWVVPKECAC. At 36 to 613 the chain is on the extracellular side; that stretch reads RSNFSRNSSS…SPWSFLKPFT (578 aa). N-linked (GlcNAc...) asparagine glycans are attached at residues asparagine 38, asparagine 42, asparagine 108, asparagine 365, asparagine 378, asparagine 404, asparagine 443, asparagine 461, and asparagine 576. Residues 614–634 form a helical membrane-spanning segment; it reads IEMWAVTGGFFLFVGAMVWIL. Residues 635–643 lie on the Cytoplasmic side of the membrane; that stretch reads EHRFNQEFR. The helical transmembrane segment at 644 to 664 threads the bilayer; sequence GPPRRQLITIFWFSFSTMFFS. At 665-675 the chain is on the cytoplasmic side; sequence HRENTVSSLGR. The helical transmembrane segment at 676–696 threads the bilayer; sequence FVLIIWLFVVLIINSSYTASL. Residues 697 to 857 lie on the Extracellular side of the membrane; the sequence is TSILTIRQLT…SEDSQLSLKS (161 aa). A helical transmembrane segment spans residues 858-878; the sequence is FWGLFLICGITCFMALTVFFW. Over 879–959 the chain is Cytoplasmic; the sequence is RVFWQYQRLL…TSQSQHGEIT (81 aa). Disordered regions lie at residues 893–913 and 936–959; these read DEER…SRAP and KSSK…GEIT. The segment covering 943–959 has biased composition (low complexity); sequence STQSAAGTSQSQHGEIT.

This sequence belongs to the glutamate-gated ion channel (TC 1.A.10.1) family. As to quaternary structure, forms a heteromeric channel with GLR3.2. In terms of tissue distribution, highly expressed in roots and at lower levels in leaves and siliques. Expressed in seedlings, cotyledons, roots (e.g. root hairs, epidermis and cortex cells), stems, leaves (e.g. vascular bundles and hydathodes), and siliques. Expressed in root phloem.

It is found in the cell membrane. It localises to the plastid. The protein localises to the chloroplast membrane. Glutamate-gated receptor that probably acts as a non-selective cation channel, at least in hypocotyls. Can be triggered by Asn, Ser, Gly and, to a lower extent, Ala, Cys and Glu. May be involved in light-signal transduction and calcium homeostasis via the regulation of calcium influx into cells. Plays an important role in the calcium-based fast transmission of environmental stress. Acts as a negative regulator of lateral root initiation and development. May restrict primordia numbers and position along the root axis by a signaling process originating in the phloem. AtGLR3.4-mediated cytosolic calcium influx may be involved in the regulation of seed germination under salt stress by modulating sodium accumulation through the SOS pathway. This is Glutamate receptor 3.4 from Arabidopsis thaliana (Mouse-ear cress).